The sequence spans 99 residues: Large ribosomal subunit protein uL23 (99 aa).

It belongs to the universal ribosomal protein uL23 family. Part of the 50S ribosomal subunit. Contacts protein L29, and trigger factor when it is bound to the ribosome.

Its function is as follows. One of the early assembly proteins it binds 23S rRNA. One of the proteins that surrounds the polypeptide exit tunnel on the outside of the ribosome. Forms the main docking site for trigger factor binding to the ribosome. In Xanthomonas axonopodis pv. citri (strain 306), this protein is Large ribosomal subunit protein uL23.